The primary structure comprises 403 residues: S-adenosylmethionine synthase (403 aa).

Histidine 15 is a binding site for ATP. Aspartate 17 provides a ligand contact to Mg(2+). Glutamate 43 lines the K(+) pocket. L-methionine contacts are provided by glutamate 56 and glutamine 99. The interval 99–109 (QSPDINQGVDR) is flexible loop. Residues 166–168 (DAK), 232–233 (KF), aspartate 241, 247–248 (RK), alanine 264, and lysine 268 each bind ATP. Position 241 (aspartate 241) interacts with L-methionine. Lysine 272 serves as a coordination point for L-methionine.

Belongs to the AdoMet synthase family. In terms of assembly, homotetramer; dimer of dimers. It depends on Mg(2+) as a cofactor. K(+) is required as a cofactor.

Its subcellular location is the cytoplasm. It carries out the reaction L-methionine + ATP + H2O = S-adenosyl-L-methionine + phosphate + diphosphate. It functions in the pathway amino-acid biosynthesis; S-adenosyl-L-methionine biosynthesis; S-adenosyl-L-methionine from L-methionine: step 1/1. In terms of biological role, catalyzes the formation of S-adenosylmethionine (AdoMet) from methionine and ATP. The overall synthetic reaction is composed of two sequential steps, AdoMet formation and the subsequent tripolyphosphate hydrolysis which occurs prior to release of AdoMet from the enzyme. The protein is S-adenosylmethionine synthase of Xanthomonas campestris pv. campestris (strain 8004).